The following is a 457-amino-acid chain: Probable cytosolic Fe-S cluster assembly factor oxy-4 (457 aa).

Position 25 (Cys25) interacts with [4Fe-4S] cluster. A disordered region spans residues 38 to 59 (KEESQVNIRTKKPKDKESSKTE). Cys71, Cys74, Cys77, Cys176, Cys232, Cys380, and Cys384 together coordinate [4Fe-4S] cluster.

This sequence belongs to the NARF family.

Component of the cytosolic iron-sulfur (Fe/S) protein assembly machinery. Required for maturation of extramitochondrial Fe/S proteins. This is Probable cytosolic Fe-S cluster assembly factor oxy-4 (oxy-4) from Caenorhabditis elegans.